Consider the following 400-residue polypeptide: Dual specificity mitogen-activated protein kinase kinase 2 (400 aa).

Methionine 1 is modified (N-acetylmethionine). Residue serine 23 is modified to Phosphoserine. Residues 72–369 enclose the Protein kinase domain; sequence FERISELGAG…LKMLTNHTFI (298 aa). Residues 78–86 and lysine 101 contribute to the ATP site; that span reads LGAGNGGVV. Aspartate 194 (proton acceptor) is an active-site residue. A (Microbial infection) O-acetylserine; by Yersinia YopJ; alternate mark is found at serine 222 and serine 226. At serine 222 the chain carries Phosphoserine; by RAF; alternate. Serine 226 carries the post-translational modification Phosphoserine; alternate. The disordered stretch occupies residues 286–310; that stretch reads GEEGEPHSISPRPRPPGRPVSGHGM. Residues serine 293, serine 295, and serine 306 each carry the phosphoserine modification. Residues threonine 394 and threonine 396 each carry the phosphothreonine modification.

The protein belongs to the protein kinase superfamily. STE Ser/Thr protein kinase family. MAP kinase kinase subfamily. In terms of assembly, interacts with MORG1. Interacts with SGK1. Interacts with KSR1. Interacts with KSR1 and BRAF; the interaction with KSR1 mediates KSR1-BRAF dimerization. Interacts with GLS. Requires Mg(2+) as cofactor. MAPKK is itself dependent on Ser/Thr phosphorylation for activity catalyzed by MAP kinase kinase kinases (RAF or MEKK1). Phosphorylated by MAP2K1/MEK1. In terms of processing, (Microbial infection) Acetylation of Ser-222 and Ser-226 by Yersinia YopJ prevents phosphorylation and activation, thus blocking the MAPK signaling pathway.

The protein localises to the cytoplasm. Its subcellular location is the membrane. It carries out the reaction L-seryl-[protein] + ATP = O-phospho-L-seryl-[protein] + ADP + H(+). The enzyme catalyses L-threonyl-[protein] + ATP = O-phospho-L-threonyl-[protein] + ADP + H(+). It catalyses the reaction L-tyrosyl-[protein] + ATP = O-phospho-L-tyrosyl-[protein] + ADP + H(+). Its function is as follows. Catalyzes the concomitant phosphorylation of a threonine and a tyrosine residue in a Thr-Glu-Tyr sequence located in MAP kinases. Activates the ERK1 and ERK2 MAP kinases. Activates BRAF in a KSR1 or KSR2-dependent manner; by binding to KSR1 or KSR2 releases the inhibitory intramolecular interaction between KSR1 or KSR2 protein kinase and N-terminal domains which promotes KSR1 or KSR2-BRAF dimerization and BRAF activation. This Homo sapiens (Human) protein is Dual specificity mitogen-activated protein kinase kinase 2 (MAP2K2).